Here is a 128-residue protein sequence, read N- to C-terminus: Large ribosomal subunit protein bL20c (128 aa).

Belongs to the bacterial ribosomal protein bL20 family.

Its subcellular location is the plastid. The protein resides in the chloroplast. Its function is as follows. Binds directly to 23S ribosomal RNA and is necessary for the in vitro assembly process of the 50S ribosomal subunit. It is not involved in the protein synthesizing functions of that subunit. The chain is Large ribosomal subunit protein bL20c from Gossypium barbadense (Sea Island cotton).